The chain runs to 160 residues: 6,7-dimethyl-8-ribityllumazine synthase (160 aa).

5-amino-6-(D-ribitylamino)uracil-binding positions include tryptophan 26, 59-61, and 81-83; these read AVE and VVI. Position 86-87 (86-87) interacts with (2S)-2-hydroxy-3-oxobutyl phosphate; the sequence is GT. The active-site Proton donor is histidine 89. Phenylalanine 114 serves as a coordination point for 5-amino-6-(D-ribitylamino)uracil. Residue arginine 128 coordinates (2S)-2-hydroxy-3-oxobutyl phosphate.

Belongs to the DMRL synthase family.

It catalyses the reaction (2S)-2-hydroxy-3-oxobutyl phosphate + 5-amino-6-(D-ribitylamino)uracil = 6,7-dimethyl-8-(1-D-ribityl)lumazine + phosphate + 2 H2O + H(+). The protein operates within cofactor biosynthesis; riboflavin biosynthesis; riboflavin from 2-hydroxy-3-oxobutyl phosphate and 5-amino-6-(D-ribitylamino)uracil: step 1/2. Its function is as follows. Catalyzes the formation of 6,7-dimethyl-8-ribityllumazine by condensation of 5-amino-6-(D-ribitylamino)uracil with 3,4-dihydroxy-2-butanone 4-phosphate. This is the penultimate step in the biosynthesis of riboflavin. The sequence is that of 6,7-dimethyl-8-ribityllumazine synthase from Frankia casuarinae (strain DSM 45818 / CECT 9043 / HFP020203 / CcI3).